The chain runs to 864 residues: Protein translocase subunit SecA (864 aa).

ATP is bound by residues Gln-87, 105 to 109 (GEGKT), and Asp-494. The disordered stretch occupies residues 809–864 (AKATELRHKEQPAELSYSGGDEDGAKTPSRRNAPKVGRNDPCPCGSGKKYKKCCGA). Residues 810–820 (KATELRHKEQP) show a composition bias toward basic and acidic residues. Cys-850, Cys-852, Cys-861, and Cys-862 together coordinate Zn(2+).

Belongs to the SecA family. In terms of assembly, monomer and homodimer. Part of the essential Sec protein translocation apparatus which comprises SecA, SecYEG and auxiliary proteins SecDF-YajC and YidC. The cofactor is Zn(2+).

It localises to the cell inner membrane. It is found in the cytoplasm. It catalyses the reaction ATP + H2O + cellular proteinSide 1 = ADP + phosphate + cellular proteinSide 2.. Its function is as follows. Part of the Sec protein translocase complex. Interacts with the SecYEG preprotein conducting channel. Has a central role in coupling the hydrolysis of ATP to the transfer of proteins into and across the cell membrane, serving as an ATP-driven molecular motor driving the stepwise translocation of polypeptide chains across the membrane. This Oleidesulfovibrio alaskensis (strain ATCC BAA-1058 / DSM 17464 / G20) (Desulfovibrio alaskensis) protein is Protein translocase subunit SecA.